The chain runs to 766 residues: FYVE, RhoGEF and PH domain-containing protein 4 (766 aa).

Disordered regions lie at residues 1 to 20 (MEEI…PSKV), 46 to 83 (NLNA…DKTQ), and 134 to 188 (ETAT…ESPL). Residues 1-150 (MEEIKPASAS…SPTTDSCDGN (150 aa)) are actin filament-binding. 2 stretches are compositionally biased toward polar residues: residues 58–83 (LTTT…DKTQ) and 145–157 (DSCD…SSYR). The span at 167–184 (LEERGAETETKVQERENG) shows a compositional bias: basic and acidic residues. The region spanning 206-393 (KLHKIANELL…STAASHSNSA (188 aa)) is the DH domain. The PH 1 domain occupies 422-521 (ELIKEGQILK…WIKALQETID (100 aa)). The FYVE-type zinc-finger motif lies at 559-619 (DNEVTMCMKC…VCKDCYQIIS (61 aa)). 8 residues coordinate Zn(2+): cysteine 565, cysteine 568, cysteine 582, cysteine 585, cysteine 590, cysteine 593, cysteine 611, and cysteine 614. One can recognise a PH 2 domain in the interval 643–740 (NSVVCSFLQY…WLKVILLAVT (98 aa)). Phosphoserine occurs at positions 702 and 716. The segment at 742-766 (ETPGGPNEHPATLDDHPEPKKKSEC) is disordered. The span at 752-766 (ATLDDHPEPKKKSEC) shows a compositional bias: basic and acidic residues.

In terms of assembly, homooligomer. As to expression, expressed in different tissues, including brain, cerebellum, peripheral nerve, skeletal muscle, heart, uterus, placenta and testis.

It is found in the cytoplasm. The protein resides in the cytoskeleton. The protein localises to the cell projection. Its subcellular location is the filopodium. In terms of biological role, activates CDC42, a member of the Ras-like family of Rho- and Rac proteins, by exchanging bound GDP for free GTP. Plays a role in regulating the actin cytoskeleton and cell shape. Activates MAPK8. In Homo sapiens (Human), this protein is FYVE, RhoGEF and PH domain-containing protein 4 (FGD4).